The following is a 400-amino-acid chain: Lysophospholipid transporter LplT (400 aa).

Transmembrane regions (helical) follow at residues 19 to 39, 53 to 73, 91 to 111, 139 to 159, 164 to 184, 195 to 213, 227 to 247, 257 to 277, 281 to 301, 304 to 324, 352 to 372, and 373 to 393; these read VIVAQFLSAFGDNALLFATLA, VLQMVFVGAYILFAPFVGQIA, AGAAGICLGINPFVGYTLVGI, MMEASTIAAILLGSVAGGVLA, IAALVACALAYAGAVAANLFI, SWRLSAMTRSFFSACVVLW, LFWGAGVTLRFLLVLWVPVAL, YLNAMVAVGIVVGAGAAAKLV, TVSRCMPAGILIGVVVAIFSL, ALLPAYALLLLIGMLGGFFVV, NSAMLLMLGLYSLAVLVGVPA, and VAIGIGFGVLFALAIAALWIW.

It belongs to the major facilitator superfamily. LplT (TC 2.A.1.42) family.

The protein resides in the cell inner membrane. Catalyzes the facilitated diffusion of 2-acyl-glycero-3-phosphoethanolamine (2-acyl-GPE) into the cell. The polypeptide is Lysophospholipid transporter LplT (Salmonella paratyphi B (strain ATCC BAA-1250 / SPB7)).